We begin with the raw amino-acid sequence, 681 residues long: Sorting nexin-41 (681 aa).

Residues 1–12 show a composition bias toward acidic residues; sequence MSTDNLFEDIEQ. The interval 1–94 is disordered; it reads MSTDNLFEDI…HNTSLNNGYP (94 aa). Positions 13–24 are enriched in polar residues; it reads DNNPSFYGNPSI. In terms of domain architecture, PX spans 113–236; sequence NDSQLQVDII…KFFDPNYELC (124 aa). Residues Arg-151, Ser-153, Lys-177, and Arg-200 each coordinate a 1,2-diacyl-sn-glycero-3-phospho-(1D-myo-inositol-3-phosphate). 2 disordered regions span residues 475-505 and 558-597; these read LASR…TENF and TATG…QTSI. 2 stretches are compositionally biased toward low complexity: residues 482–497 and 558–589; these read DNDS…NNND and TATG…QSQS.

It belongs to the sorting nexin family.

It localises to the endosome membrane. The protein localises to the endomembrane system. May be required for cytoplasm to vacuole transport (Cvt) and pexophagy. The protein is Sorting nexin-41 (SNX41) of Candida albicans (strain SC5314 / ATCC MYA-2876) (Yeast).